The sequence spans 308 residues: MTAISEALSGITDHQKAHVLAEALPWLQQFRDKVVVVKYGGNAMVDDALKTAFAADMAFLRTVGIQPVVVHGGGPQINAMLGKLGMTGEFKGGFRVTTPEVMDVVRMVLFGQVGRELVGLINAHGPYAVGISGEDAHLFTATKRTVMVEGKPTDIGLVGDVTTVNPEAVLDLIRAGRIPVVSTIAPDSDGVVHNINADTAAAALAEAIGAEKLVVLTDVEGLYTNWPDRDSLATEIDVDALAQLLPSLDAGMVPKMEACLRAVRGGVPTAHVIDGRVAHSVLLELFTGEGIGTMVTPGPTSPTEGVAS.

Residues 73–74 (GG), R95, and N194 contribute to the substrate site.

The protein belongs to the acetylglutamate kinase family. ArgB subfamily.

It localises to the cytoplasm. It carries out the reaction N-acetyl-L-glutamate + ATP = N-acetyl-L-glutamyl 5-phosphate + ADP. It functions in the pathway amino-acid biosynthesis; L-arginine biosynthesis; N(2)-acetyl-L-ornithine from L-glutamate: step 2/4. Its function is as follows. Catalyzes the ATP-dependent phosphorylation of N-acetyl-L-glutamate. The chain is Acetylglutamate kinase from Rhodococcus jostii (strain RHA1).